Here is a 413-residue protein sequence, read N- to C-terminus: Chloramphenicol resistance protein CraA (413 aa).

Transmembrane regions (helical) follow at residues 18–38, 55–75, 84–104, 110–130, 147–167, 170–190, 228–248, 260–280, 289–309, 312–332, 349–369, and 373–393; these read LMFPLALVLFEFAVYIGNDLI, WAPSSMSFYLLGGASVAWLLG, KKVLLSGVLFFALCCFLILLT, FLTLRFLQGIGLSVISAVGYA, LMANISLLAPLLGPVLGAFLI, VSWHWGFVAIALLALLSWVGL, ALPLVGMPLMLWIALSPIILV, LAQFPVFLGLIVGNIVLIKII, VLIGLPIMLTGTLILILGVVW, YLIPCLLIGMTLICFGEGISF, TVAAAVSMLLMTSFFAMIELV, and YTQFHLWAFVLSAFAFIALWF.

This sequence belongs to the major facilitator superfamily.

The protein localises to the cell inner membrane. Its function is as follows. Efflux pump that mediates resistance to chloramphenicol. The sequence is that of Chloramphenicol resistance protein CraA from Acinetobacter baumannii (strain ATCC 19606 / DSM 30007 / JCM 6841 / CCUG 19606 / CIP 70.34 / NBRC 109757 / NCIMB 12457 / NCTC 12156 / 81).